The following is a 415-amino-acid chain: Gamma-glutamyl phosphate reductase 1 (415 aa).

This sequence belongs to the gamma-glutamyl phosphate reductase family.

It localises to the cytoplasm. It carries out the reaction L-glutamate 5-semialdehyde + phosphate + NADP(+) = L-glutamyl 5-phosphate + NADPH + H(+). It participates in amino-acid biosynthesis; L-proline biosynthesis; L-glutamate 5-semialdehyde from L-glutamate: step 2/2. Its function is as follows. Catalyzes the NADPH-dependent reduction of L-glutamate 5-phosphate into L-glutamate 5-semialdehyde and phosphate. The product spontaneously undergoes cyclization to form 1-pyrroline-5-carboxylate. This Bacillus licheniformis (strain ATCC 14580 / DSM 13 / JCM 2505 / CCUG 7422 / NBRC 12200 / NCIMB 9375 / NCTC 10341 / NRRL NRS-1264 / Gibson 46) protein is Gamma-glutamyl phosphate reductase 1.